The sequence spans 390 residues: Transforming growth factor beta-1 proprotein (390 aa).

The N-terminal stretch at 1–29 (MPPSGLRLLPLLLPLLWLLMLTPGRPVAG) is a signal peptide. The segment at 30–74 (LSTCKTIDMELVKRKGIEAIRGQILSKLRLASPPSQGDVPPGPLP) is straightjacket domain. Residues 75-271 (EAILALYNST…ATPLERAQHL (197 aa)) form an arm domain region. Asn-82, Asn-136, and Asn-176 each carry an N-linked (GlcNAc...) asparagine glycan. The segment at 226-252 (DSKDNTLQVDINGFSSGRRGDLATIHG) is bowtie tail. The Cell attachment site signature appears at 244–246 (RGD). 4 cysteine pairs are disulfide-bonded: Cys-285–Cys-294, Cys-293–Cys-356, Cys-322–Cys-387, and Cys-326–Cys-389.

The protein belongs to the TGF-beta family. Homodimer; disulfide-linked. Interacts with the serine proteases, HTRA1 and HTRA3: the interaction with either inhibits TGFB1-mediated signaling and the HTRA protease activity is required for this inhibition. May interact with THSD4; this interaction may lead to sequestration by FBN1 microfibril assembly and attenuation of TGFB signaling. Interacts with CD109, DPT and ASPN. Interacts with EFEMP2. Interacts with TSKU; the interaction contributes to regulation of the hair cycle. Interacts with TGFBR3. As to quaternary structure, homodimer; disulfide-linked. Interacts with transforming growth factor beta-1 (TGF-beta-1) chain; interaction is non-covalent and maintains TGF-beta-1 in a latent state; each latency-associated peptide (LAP) monomer interacts with TGF-beta-1 in the other monomer. Interacts with LTBP1; leading to regulation of TGF-beta-1 activation. Interacts with LRRC32/GARP; leading to regulation of TGF-beta-1 activation on the surface of activated regulatory T-cells (Tregs). Interacts with LRRC33/NRROS; leading to regulation of TGF-beta-1 activation in macrophages and microglia. Interacts (via cell attachment site) with integrins ITGAV and ITGB6 (ITGAV:ITGB6), leading to release of the active TGF-beta-1. Interacts with NREP; the interaction results in a decrease in TGFB1 autoinduction. Interacts with HSP90AB1; inhibits latent TGFB1 activation. In terms of assembly, homodimer; disulfide-linked. Interacts with TGF-beta receptors (TGFBR1 and TGFBR2), leading to signal transduction. Post-translationally, transforming growth factor beta-1 proprotein: The precursor proprotein is cleaved in the Golgi apparatus by FURIN to form Transforming growth factor beta-1 (TGF-beta-1) and Latency-associated peptide (LAP) chains, which remain non-covalently linked, rendering TGF-beta-1 inactive. N-glycosylated. Deglycosylation leads to activation of Transforming growth factor beta-1 (TGF-beta-1); mechanisms triggering deglycosylation-driven activation of TGF-beta-1 are however unclear.

Its subcellular location is the secreted. It is found in the extracellular space. It localises to the extracellular matrix. In terms of biological role, transforming growth factor beta-1 proprotein: Precursor of the Latency-associated peptide (LAP) and Transforming growth factor beta-1 (TGF-beta-1) chains, which constitute the regulatory and active subunit of TGF-beta-1, respectively. Its function is as follows. Required to maintain the Transforming growth factor beta-1 (TGF-beta-1) chain in a latent state during storage in extracellular matrix. Associates non-covalently with TGF-beta-1 and regulates its activation via interaction with 'milieu molecules', such as LTBP1, LRRC32/GARP and LRRC33/NRROS, that control activation of TGF-beta-1. Interaction with LRRC33/NRROS regulates activation of TGF-beta-1 in macrophages and microglia. Interaction with LRRC32/GARP controls activation of TGF-beta-1 on the surface of activated regulatory T-cells (Tregs). Interaction with integrins (ITGAV:ITGB6 or ITGAV:ITGB8) results in distortion of the Latency-associated peptide chain and subsequent release of the active TGF-beta-1. Functionally, multifunctional protein that regulates the growth and differentiation of various cell types and is involved in various processes, such as normal development, immune function, microglia function and responses to neurodegeneration. Activation into mature form follows different steps: following cleavage of the proprotein in the Golgi apparatus, Latency-associated peptide (LAP) and Transforming growth factor beta-1 (TGF-beta-1) chains remain non-covalently linked rendering TGF-beta-1 inactive during storage in extracellular matrix. At the same time, LAP chain interacts with 'milieu molecules', such as LTBP1, LRRC32/GARP and LRRC33/NRROS that control activation of TGF-beta-1 and maintain it in a latent state during storage in extracellular milieus. TGF-beta-1 is released from LAP by integrins (ITGAV:ITGB6 or ITGAV:ITGB8): integrin-binding to LAP stabilizes an alternative conformation of the LAP bowtie tail and results in distortion of the LAP chain and subsequent release of the active TGF-beta-1. Once activated following release of LAP, TGF-beta-1 acts by binding to TGF-beta receptors (TGFBR1 and TGFBR2), which transduce signal. While expressed by many cells types, TGF-beta-1 only has a very localized range of action within cell environment thanks to fine regulation of its activation by Latency-associated peptide chain (LAP) and 'milieu molecules'. Plays an important role in bone remodeling: acts as a potent stimulator of osteoblastic bone formation, causing chemotaxis, proliferation and differentiation in committed osteoblasts. Can promote either T-helper 17 cells (Th17) or regulatory T-cells (Treg) lineage differentiation in a concentration-dependent manner. At high concentrations, leads to FOXP3-mediated suppression of RORC and down-regulation of IL-17 expression, favoring Treg cell development. At low concentrations in concert with IL-6 and IL-21, leads to expression of the IL-17 and IL-23 receptors, favoring differentiation to Th17 cells. Stimulates sustained production of collagen through the activation of CREB3L1 by regulated intramembrane proteolysis (RIP). Mediates SMAD2/3 activation by inducing its phosphorylation and subsequent translocation to the nucleus. Positively regulates odontoblastic differentiation in dental papilla cells, via promotion of IPO7-mediated translocation of phosphorylated SMAD2 to the nucleus and subsequent transcription of target genes. Can induce epithelial-to-mesenchymal transition (EMT) and cell migration in various cell types. In Ovis aries (Sheep), this protein is Transforming growth factor beta-1 proprotein (TGFB1).